The sequence spans 551 residues: Thermolysin (551 aa).

The N-terminal stretch at Met1 to Ala31 is a signal peptide. Residues Ser32–Ser235 constitute a propeptide, activation peptide. Ca(2+) contacts are provided by Asp292, Asp294, Gln296, and Asp373. Position 377 (His377) interacts with Zn(2+). Glu378 is an active-site residue. The Zn(2+) site is built by His381 and Glu401. Ca(2+)-binding residues include Glu412, Asn418, Asp420, Glu422, Glu425, Thr429, Ile432, and Asp435. Catalysis depends on His466, which acts as the Proton donor.

Belongs to the peptidase M4 family. Ca(2+) serves as cofactor. It depends on Zn(2+) as a cofactor.

Its subcellular location is the secreted. The enzyme catalyses Preferential cleavage: Xaa-|-Leu &gt; Xaa-|-Phe.. In terms of biological role, extracellular zinc metalloprotease. The chain is Thermolysin (nprS) from Geobacillus stearothermophilus (Bacillus stearothermophilus).